The sequence spans 461 residues: Asparagine--tRNA ligase (461 aa).

This sequence belongs to the class-II aminoacyl-tRNA synthetase family. As to quaternary structure, homodimer.

It is found in the cytoplasm. The catalysed reaction is tRNA(Asn) + L-asparagine + ATP = L-asparaginyl-tRNA(Asn) + AMP + diphosphate + H(+). This chain is Asparagine--tRNA ligase, found in Solibacter usitatus (strain Ellin6076).